Consider the following 152-residue polypeptide: Transcriptional repressor NrdR (152 aa).

A zinc finger lies at 3–34; that stretch reads CPKCGSLNDKVVDTRQSKDGTVIRRRRECLDC. One can recognise an ATP-cone domain in the interval 49–139; the sequence is IVVKKKNGTT…VYNEFQDIKD (91 aa).

Belongs to the NrdR family. Zn(2+) serves as cofactor.

In terms of biological role, negatively regulates transcription of bacterial ribonucleotide reductase nrd genes and operons by binding to NrdR-boxes. The sequence is that of Transcriptional repressor NrdR from Persephonella marina (strain DSM 14350 / EX-H1).